The primary structure comprises 63 residues: Large ribosomal subunit protein bL28 (63 aa).

This sequence belongs to the bacterial ribosomal protein bL28 family.

The chain is Large ribosomal subunit protein bL28 from Clostridium beijerinckii (strain ATCC 51743 / NCIMB 8052) (Clostridium acetobutylicum).